A 408-amino-acid polypeptide reads, in one-letter code: Na(+)/H(+) antiporter NhaA (408 aa).

The next 12 helical transmembrane spans lie at 42-62 (LMFV…PVYF), 69-89 (VLGL…FFLL), 110-130 (ALPG…FIAV), 140-160 (GWAI…SLLG), 169-189 (IFLT…IALF), 192-212 (AELT…LAAL), 215-235 (FGVK…FFVL), 238-258 (GIHA…QAST), 277-297 (VAFL…FAGL), 312-332 (LGLF…AIWL), 346-366 (LYGV…IGLL), and 380-400 (IGVL…LRVT).

Belongs to the NhaA Na(+)/H(+) (TC 2.A.33) antiporter family.

The protein localises to the cell inner membrane. It catalyses the reaction Na(+)(in) + 2 H(+)(out) = Na(+)(out) + 2 H(+)(in). Functionally, na(+)/H(+) antiporter that extrudes sodium in exchange for external protons. In Nitrobacter hamburgensis (strain DSM 10229 / NCIMB 13809 / X14), this protein is Na(+)/H(+) antiporter NhaA.